Consider the following 217-residue polypeptide: Thiopurine S-methyltransferase (217 aa).

S-adenosyl-L-methionine contacts are provided by Trp-10, Leu-45, Glu-66, and Arg-127.

This sequence belongs to the class I-like SAM-binding methyltransferase superfamily. TPMT family.

It is found in the cytoplasm. It carries out the reaction S-adenosyl-L-methionine + a thiopurine = S-adenosyl-L-homocysteine + a thiopurine S-methylether.. The polypeptide is Thiopurine S-methyltransferase (Acinetobacter baylyi (strain ATCC 33305 / BD413 / ADP1)).